The following is a 480-amino-acid chain: Proline--tRNA ligase (480 aa).

This sequence belongs to the class-II aminoacyl-tRNA synthetase family. ProS type 3 subfamily. As to quaternary structure, homodimer.

The protein localises to the cytoplasm. The catalysed reaction is tRNA(Pro) + L-proline + ATP = L-prolyl-tRNA(Pro) + AMP + diphosphate. In terms of biological role, catalyzes the attachment of proline to tRNA(Pro) in a two-step reaction: proline is first activated by ATP to form Pro-AMP and then transferred to the acceptor end of tRNA(Pro). In Mycobacterium leprae (strain Br4923), this protein is Proline--tRNA ligase.